The following is a 344-amino-acid chain: AA9 family lytic polysaccharide monooxygenase D (344 aa).

A signal peptide spans 1-23 (MKTATSYAAFLLSALAALPHASA). Histidine 24 lines the Cu(2+) pocket. A disulfide bond links cysteine 70 and cysteine 193. O2 is bound at residue histidine 179. A Cu(2+)-binding site is contributed by tyrosine 190. 2 N-linked (GlcNAc...) asparagine glycosylation sites follow: asparagine 201 and asparagine 207. The segment at 240-321 (PPLSNLVSGD…PTTSGNLSAN (82 aa)) is disordered. A compositionally biased stretch (low complexity) spans 259 to 292 (STSSATLSGGAAPTGTASGSTPAGTSQPSSTTGT). Residues 311–320 (APTTSGNLSA) are compositionally biased toward polar residues. An N-linked (GlcNAc...) asparagine glycan is attached at asparagine 317.

The protein belongs to the polysaccharide monooxygenase AA9 family. Cu(2+) serves as cofactor.

Its subcellular location is the secreted. The catalysed reaction is [(1-&gt;4)-beta-D-glucosyl]n+m + reduced acceptor + O2 = 4-dehydro-beta-D-glucosyl-[(1-&gt;4)-beta-D-glucosyl]n-1 + [(1-&gt;4)-beta-D-glucosyl]m + acceptor + H2O.. Lytic polysaccharide monooxygenase (LPMO) that depolymerizes crystalline and amorphous polysaccharides via the oxidation of scissile alpha- or beta-(1-4)-glycosidic bonds, yielding C1 or C4 oxidation products. Catalysis by LPMOs requires the reduction of the active-site copper from Cu(II) to Cu(I) by a reducing agent and H(2)O(2) or O(2) as a cosubstrate. The sequence is that of AA9 family lytic polysaccharide monooxygenase D from Gloeophyllum trabeum (strain ATCC 11539 / FP-39264 / Madison 617) (Brown rot fungus).